A 431-amino-acid chain; its full sequence is Histidinol dehydrogenase (431 aa).

NAD(+) contacts are provided by tyrosine 127, glutamine 185, and asparagine 208. Substrate-binding residues include serine 234, glutamine 256, and histidine 259. Zn(2+)-binding residues include glutamine 256 and histidine 259. Residues glutamate 323 and histidine 324 each act as proton acceptor in the active site. Residues histidine 324, aspartate 357, glutamate 411, and histidine 416 each contribute to the substrate site. A Zn(2+)-binding site is contributed by aspartate 357. Histidine 416 contacts Zn(2+).

The protein belongs to the histidinol dehydrogenase family. The cofactor is Zn(2+).

The enzyme catalyses L-histidinol + 2 NAD(+) + H2O = L-histidine + 2 NADH + 3 H(+). It functions in the pathway amino-acid biosynthesis; L-histidine biosynthesis; L-histidine from 5-phospho-alpha-D-ribose 1-diphosphate: step 9/9. Functionally, catalyzes the sequential NAD-dependent oxidations of L-histidinol to L-histidinaldehyde and then to L-histidine. This chain is Histidinol dehydrogenase, found in Vibrio cholerae serotype O1 (strain ATCC 39315 / El Tor Inaba N16961).